Here is a 172-residue protein sequence, read N- to C-terminus: Large ribosomal subunit protein uL10 (172 aa).

This sequence belongs to the universal ribosomal protein uL10 family. Part of the ribosomal stalk of the 50S ribosomal subunit. The N-terminus interacts with L11 and the large rRNA to form the base of the stalk. The C-terminus forms an elongated spine to which L12 dimers bind in a sequential fashion forming a multimeric L10(L12)X complex.

In terms of biological role, forms part of the ribosomal stalk, playing a central role in the interaction of the ribosome with GTP-bound translation factors. This chain is Large ribosomal subunit protein uL10, found in Syntrophotalea carbinolica (strain DSM 2380 / NBRC 103641 / GraBd1) (Pelobacter carbinolicus).